We begin with the raw amino-acid sequence, 400 residues long: Betaine--homocysteine S-methyltransferase 1 (400 aa).

In terms of domain architecture, Hcy-binding spans 8–309 (RGVLERLNAG…YHIRAVAEEL (302 aa)). The Zn(2+) site is built by Cys212, Cys294, and Cys295.

In terms of assembly, homotetramer. Requires Zn(2+) as cofactor.

It localises to the cytoplasm. It catalyses the reaction L-homocysteine + glycine betaine = N,N-dimethylglycine + L-methionine. It functions in the pathway amine and polyamine degradation; betaine degradation; sarcosine from betaine: step 1/2. The protein operates within amino-acid biosynthesis; L-methionine biosynthesis via de novo pathway; L-methionine from L-homocysteine (BhmT route): step 1/1. In terms of biological role, involved in the regulation of homocysteine metabolism. Converts betaine and homocysteine to dimethylglycine and methionine, respectively. This reaction is also required for the irreversible oxidation of choline. This chain is Betaine--homocysteine S-methyltransferase 1 (bhmt), found in Danio rerio (Zebrafish).